The sequence spans 715 residues: Metastasis-associated protein MTA1 (715 aa).

One can recognise a BAH domain in the interval 1–164; it reads MAANMYRVGD…PQQKTLLADK (164 aa). Residues 165–276 form the ELM2 domain; it reads GEIRVGNRYQ…KAISALVPQG (112 aa). A Glycyl lysine isopeptide (Lys-Gly) (interchain with G-Cter in ubiquitin) cross-link involves residue K182. Positions 283-335 constitute an SANT domain; the sequence is DEMEEWSASEANLFEEALEKYGKDFTDIQQDFLPWKSLTSIIEYYYMWKTTDR. S386 bears the Phosphoserine mark. Residues 393-420 form a GATA-type; atypical zinc finger; that stretch reads CESCYTTQSYQWYSWGPPNMQCRLCASC. The tract at residues 437-460 is disordered; sequence DGERPGPNRNNMSPHGIPARSSGS. Residue S449 is modified to Phosphoserine. Residue K509 forms a Glycyl lysine isopeptide (Lys-Gly) (interchain with G-Cter in SUMO2 and SUMO3) linkage. S522 is modified (phosphoserine). Over residues 542-552 the composition is skewed to basic and acidic residues; sequence ETHPRPPKPDP. The disordered stretch occupies residues 542–590; the sequence is ETHPRPPKPDPVKSSSSVLSSLTPAKSAPVINNGSPTILGKRSYEQHNG. The SH3-binding motif lies at 545–552; sequence PRPPKPDP. K549 is covalently cross-linked (Glycyl lysine isopeptide (Lys-Gly) (interchain with G-Cter in SUMO2)). Over residues 553–565 the composition is skewed to low complexity; the sequence is VKSSSSVLSSLTP. At T564 the chain carries Phosphothreonine. The residue at position 576 (S576) is a Phosphoserine. At T578 the chain carries Phosphothreonine. K626 is modified (N6-acetyllysine; alternate). K626 is covalently cross-linked (Glycyl lysine isopeptide (Lys-Gly) (interchain with G-Cter in ubiquitin); alternate). At S639 the chain carries Phosphoserine. The tract at residues 656–686 is interaction with RBBP4; sequence DVFYMATEETRKIRKLLSSSETKRAARRPYK. Positions 673–715 are disordered; it reads SSSETKRAARRPYKPIALRQSQALPLRPPPPAPVNDEPIVIED. The SH3-binding motif lies at 696–705; sequence LPLRPPPPAP. The short motif at 711-715 is the SUMO interaction motif 1 (SIM); crucial for efficient sumoylation element; that stretch reads IVIED.

Belongs to the metastasis-associated protein family. Component of the nucleosome remodeling and deacetylase (NuRD) repressor complex, composed of core proteins MTA1, MTA2, MTA3, RBBP4, RBBP7, HDAC1, HDAC2, MBD2, MBD3, and peripherally associated proteins CDK2AP1, CDK2AP2, GATAD2A, GATAD2B, CHD3, CHD4 and CHD5. The exact stoichiometry of the NuRD complex is unknown, and some subunits such as MBD2 and MBD3, GATAD2A and GATAD2B, and CHD3, CHD4 and CHD5 define mutually exclusive NuRD complexes. Interacts with RBBP4; the interaction is direct. Interacts with BMAL1. Interacts with CLOCK. Interacts with COP1. Interacts with CSNK1G2 in the cytoplasm. Interacts with EP300. Interacts with HDAC2. Interacts with ITGB3BP/CENPR. Interacts with MBD3L2. Interacts with MDM2. Interacts with NACC2. Interacts with p53/TP53. Interacts with PIAS1. Interacts with PIAS3. Interacts with PIAS4. Interacts with PWWP2A. Interacts with PWWP2B. Interacts with SENP1. Interacts with SENP2. Interacts with SIX3; facilitates the binding of SIX3 to the core DNA motif of SIX3 promoter. Interacts with SUMO1. Interacts with SUMO2. Interacts with TFCP2L1; which is indispensable for TFCP2L1-mediated self-renewal-promoting effect and endoderm-inhibiting action. Interacts with TFAP2C. Interacts with TPR. Interacts with UBE2I/UBC9. Post-translationally, phosphorylation by CSNK1G2/CK1 triggered by estrogen enhances corepression of estrogen receptor (ER). Acetylation is essential for its transcriptional coactivator activity. In terms of processing, sumoylation positively regulates its transcriptional corepressor activity but does not affect the protein stability. Sumoylated preferentially by SUMO2 or SUMO3 than SUMO1. Sumoylation is enhanced by PIAS1/3/4 and preferentially sumoylated by SUMO2 in the presence of PIAS1/3/4. Desumoylated by SENP1. Post-translationally, ubiquitinated by COP1, which leads to proteasomal degradation. As to expression, widely expressed but not in skeletal muscle. Highly expressed in the brain, liver, kidney and cardiac muscle and in mammary tumors.

The protein localises to the nucleus. The protein resides in the nucleus envelope. Its subcellular location is the cytoplasm. It localises to the cytoskeleton. Functionally, transcriptional coregulator which can act as both a transcriptional corepressor and coactivator. Acts as a component of the histone deacetylase NuRD complex which participates in the remodeling of chromatin. In the NuRD complex, regulates transcription of its targets by modifying the acetylation status of the target chromatin and cofactor accessibility to the target DNA. In conjunction with other components of NuRD, acts as a transcriptional corepressor of BRCA1, ESR1, TFF1 and CDKN1A. Acts as a transcriptional coactivator of BCAS3, PAX5 and SUMO2, independent of the NuRD complex. Stimulates the expression of WNT1 by inhibiting the expression of its transcriptional corepressor SIX3. Regulates p53-dependent and -independent DNA repair processes following genotoxic stress. Regulates the stability and function of p53/TP53 by inhibiting its ubiquitination by COP1 and MDM2 thereby regulating the p53-dependent DNA repair. Plays a role in the regulation of the circadian clock and is essential for the generation and maintenance of circadian rhythms under constant light and for normal entrainment of behavior to light-dark (LD) cycles. Positively regulates the CLOCK-BMAL1 heterodimer mediated transcriptional activation of its own transcription and the transcription of CRY1. Regulates deacetylation of BMAL1 by regulating SIRT1 expression, resulting in derepressing CRY1-mediated transcription repression. With Tfcp2l1, promotes establishment and maintenance of pluripotency in embryonic stem cells (ESCs) and inhibits endoderm differentiation. This chain is Metastasis-associated protein MTA1 (Mta1), found in Mus musculus (Mouse).